We begin with the raw amino-acid sequence, 400 residues long: S-adenosylmethionine synthase (400 aa).

An ATP-binding site is contributed by 137-142 (GEGSGD).

The protein belongs to the AdoMet synthase 2 family. Mg(2+) is required as a cofactor.

It catalyses the reaction L-methionine + ATP + H2O = S-adenosyl-L-methionine + phosphate + diphosphate. It functions in the pathway amino-acid biosynthesis; S-adenosyl-L-methionine biosynthesis; S-adenosyl-L-methionine from L-methionine: step 1/1. Its function is as follows. Catalyzes the formation of S-adenosylmethionine from methionine and ATP. This Haloarcula marismortui (strain ATCC 43049 / DSM 3752 / JCM 8966 / VKM B-1809) (Halobacterium marismortui) protein is S-adenosylmethionine synthase.